The primary structure comprises 356 residues: Phosphoserine aminotransferase (356 aa).

R41 provides a ligand contact to L-glutamate. Residues 76 to 77 (AS), W102, T150, D169, and Q192 contribute to the pyridoxal 5'-phosphate site. K193 is subject to N6-(pyridoxal phosphate)lysine. Pyridoxal 5'-phosphate is bound at residue 234 to 235 (NT).

Belongs to the class-V pyridoxal-phosphate-dependent aminotransferase family. SerC subfamily. Homodimer. Requires pyridoxal 5'-phosphate as cofactor.

It is found in the cytoplasm. It catalyses the reaction O-phospho-L-serine + 2-oxoglutarate = 3-phosphooxypyruvate + L-glutamate. The enzyme catalyses 4-(phosphooxy)-L-threonine + 2-oxoglutarate = (R)-3-hydroxy-2-oxo-4-phosphooxybutanoate + L-glutamate. It functions in the pathway amino-acid biosynthesis; L-serine biosynthesis; L-serine from 3-phospho-D-glycerate: step 2/3. It participates in cofactor biosynthesis; pyridoxine 5'-phosphate biosynthesis; pyridoxine 5'-phosphate from D-erythrose 4-phosphate: step 3/5. Functionally, catalyzes the reversible conversion of 3-phosphohydroxypyruvate to phosphoserine and of 3-hydroxy-2-oxo-4-phosphonooxybutanoate to phosphohydroxythreonine. This Flavobacterium psychrophilum (strain ATCC 49511 / DSM 21280 / CIP 103535 / JIP02/86) protein is Phosphoserine aminotransferase.